The chain runs to 280 residues: Phosphate import ATP-binding protein PstB (280 aa).

Residues 34 to 275 enclose the ABC transporter domain; sequence IEVKNLNFFY…PARKETEDYI (242 aa). 66 to 73 contacts ATP; sequence GPSGCGKS.

Belongs to the ABC transporter superfamily. Phosphate importer (TC 3.A.1.7) family. In terms of assembly, the complex is composed of two ATP-binding proteins (PstB), two transmembrane proteins (PstC and PstA) and a solute-binding protein (PstS).

The protein localises to the cell inner membrane. It catalyses the reaction phosphate(out) + ATP + H2O = ADP + 2 phosphate(in) + H(+). Functionally, part of the ABC transporter complex PstSACB involved in phosphate import. Responsible for energy coupling to the transport system. This Burkholderia mallei (strain ATCC 23344) protein is Phosphate import ATP-binding protein PstB.